Reading from the N-terminus, the 285-residue chain is Urease accessory protein UreD 1 (285 aa).

This sequence belongs to the UreD family. In terms of assembly, ureD, UreF and UreG form a complex that acts as a GTP-hydrolysis-dependent molecular chaperone, activating the urease apoprotein by helping to assemble the nickel containing metallocenter of UreC. The UreE protein probably delivers the nickel.

The protein localises to the cytoplasm. Functionally, required for maturation of urease via the functional incorporation of the urease nickel metallocenter. The sequence is that of Urease accessory protein UreD 1 from Pseudomonas syringae pv. tomato (strain ATCC BAA-871 / DC3000).